Consider the following 452-residue polypeptide: General transcription and DNA repair factor IIH subunit TFB2 (452 aa).

Belongs to the TFB2 family. In terms of assembly, component of the 7-subunit TFIIH core complex composed of XPB, XPD, TFB1/GTF2H1, GTF2H2/P44, TFB4/GTF2H3, TFB2/GTF2H4 and TFB5/GTF2H5, which is active in NER. The core complex associates with the 3-subunit CDK-activating kinase (CAK) module composed of CYCH1/cyclin H1, CDKD and MAT1/At4g30820 to form the 10-subunit holoenzyme (holo-TFIIH) active in transcription.

The protein resides in the nucleus. In terms of biological role, component of the general transcription and DNA repair factor IIH (TFIIH) core complex, which is involved in general and transcription-coupled nucleotide excision repair (NER) of damaged DNA and, when complexed to CAK, in RNA transcription by RNA polymerase II. In NER, TFIIH acts by opening DNA around the lesion to allow the excision of the damaged oligonucleotide and its replacement by a new DNA fragment. In transcription, TFIIH has an essential role in transcription initiation. When the pre-initiation complex (PIC) has been established, TFIIH is required for promoter opening and promoter escape. Phosphorylation of the C-terminal tail (CTD) of the largest subunit of RNA polymerase II by the kinase module CAK controls the initiation of transcription. The sequence is that of General transcription and DNA repair factor IIH subunit TFB2 from Arabidopsis thaliana (Mouse-ear cress).